Reading from the N-terminus, the 226-residue chain is Ribosomal RNA small subunit methyltransferase G (226 aa).

S-adenosyl-L-methionine-binding positions include glycine 95, leucine 100, 146-147 (VE), and arginine 159.

Belongs to the methyltransferase superfamily. RNA methyltransferase RsmG family.

The protein localises to the cytoplasm. It carries out the reaction guanosine(527) in 16S rRNA + S-adenosyl-L-methionine = N(7)-methylguanosine(527) in 16S rRNA + S-adenosyl-L-homocysteine. Specifically methylates the N7 position of guanine in position 527 of 16S rRNA. This is Ribosomal RNA small subunit methyltransferase G from Acidovorax sp. (strain JS42).